The following is a 350-amino-acid chain: F(420)H(2) dehydrogenase subunit H (350 aa).

The next 8 membrane-spanning stretches (helical) occupy residues 21–41 (GTVGLVLVGAIFLGGMAAVWI), 94–114 (VFMLTSLFLMLVAIPVGAVFI), 128–148 (ISILFIEAVSAINIFGIFMAA), 173–193 (PLGIAIVSVAVMTGSLNIIDI), 200–220 (FVWNIFLQPIGFVVFFIALMA), 261–281 (ILGSFLVALLFLGGWNVPAFV), 288–308 (GLIAPTGILLLKTVLVLMTII), and 330–350 (LLPLSLLNLAWAVGLGLYLGA).

It belongs to the complex I subunit 1 family. As to quaternary structure, the FPO complex is composed of at least 13 different subunits. FpoA, FpoH, FpoJ, FpoK, FpoL, FpoM and FpoN proteins constitute the membrane sector of the complex.

Its subcellular location is the cell membrane. The catalysed reaction is methanophenazine + reduced coenzyme F420-(gamma-L-Glu)(n) = dihydromethanophenazine + oxidized coenzyme F420-(gamma-L-Glu)(n) + H(+). Functionally, component of the F(420)H(2) dehydrogenase (FPO complex) which is part of the energy-conserving F(420)H(2):heterodisulfide oxidoreductase system. The membrane-bound electron transfer system of the complex plays an important role in the metabolism of methylotrophic methanogens when the organisms grow on methanol or methylamines. Catalyzes the oxidation of methanophenazine to dihydromethanophenazine. It shuttles electrons from F(420)H(2), via FAD and iron-sulfur (Fe-S) centers, to methanophenazine (an electron carrier in the membrane). It couples the redox reaction to proton translocation (for every two electrons transferred, two hydrogen ions are translocated across the cytoplasmic membrane), and thus conserves the redox energy in a proton gradient. It also catalyzes the oxidation of F(420)H(2) with quinones such as 2,3-dimethyl-1,4-naphthoquinone, 2-methyl-1,4-naphthoquinone and tetramethyl-p-benzoquinone. This is F(420)H(2) dehydrogenase subunit H from Methanosarcina mazei (strain ATCC BAA-159 / DSM 3647 / Goe1 / Go1 / JCM 11833 / OCM 88) (Methanosarcina frisia).